The following is a 193-amino-acid chain: ATP-dependent protease subunit HslV (193 aa).

Residue Thr-12 is part of the active site. Residues Ala-167, Cys-170, and Thr-173 each contribute to the Na(+) site.

It belongs to the peptidase T1B family. HslV subfamily. As to quaternary structure, a double ring-shaped homohexamer of HslV is capped on each side by a ring-shaped HslU homohexamer. The assembly of the HslU/HslV complex is dependent on binding of ATP.

The protein localises to the cytoplasm. It carries out the reaction ATP-dependent cleavage of peptide bonds with broad specificity.. Allosterically activated by HslU binding. Its function is as follows. Protease subunit of a proteasome-like degradation complex believed to be a general protein degrading machinery. The chain is ATP-dependent protease subunit HslV from Bartonella henselae (strain ATCC 49882 / DSM 28221 / CCUG 30454 / Houston 1) (Rochalimaea henselae).